Consider the following 20-residue polypeptide: Cytochrome P450 3A5 (20 aa).

Belongs to the cytochrome P450 family. It depends on heme as a cofactor.

The protein localises to the endoplasmic reticulum membrane. The protein resides in the microsome membrane. The catalysed reaction is an organic molecule + reduced [NADPH--hemoprotein reductase] + O2 = an alcohol + oxidized [NADPH--hemoprotein reductase] + H2O + H(+). Its function is as follows. 6-beta-testosterone hydroxylase. The chain is Cytochrome P450 3A5 from Papio sp. (Baboon).